Here is an 81-residue protein sequence, read N- to C-terminus: Small ribosomal subunit protein bS20 (81 aa).

It belongs to the bacterial ribosomal protein bS20 family.

Functionally, binds directly to 16S ribosomal RNA. The sequence is that of Small ribosomal subunit protein bS20 from Mycoplasma capricolum subsp. capricolum (strain California kid / ATCC 27343 / NCTC 10154).